The primary structure comprises 178 residues: Large ribosomal subunit protein uL6 (178 aa).

Belongs to the universal ribosomal protein uL6 family. Part of the 50S ribosomal subunit.

Its function is as follows. This protein binds to the 23S rRNA, and is important in its secondary structure. It is located near the subunit interface in the base of the L7/L12 stalk, and near the tRNA binding site of the peptidyltransferase center. The chain is Large ribosomal subunit protein uL6 from Corynebacterium kroppenstedtii (strain DSM 44385 / JCM 11950 / CIP 105744 / CCUG 35717).